The following is a 152-amino-acid chain: UPF0225 protein YchJ (152 aa).

This sequence belongs to the UPF0225 family.

In Shigella flexneri serotype 5b (strain 8401), this protein is UPF0225 protein YchJ.